A 233-amino-acid chain; its full sequence is Ion-translocating oxidoreductase complex subunit E (233 aa).

6 helical membrane passes run 18–38, 39–59, 69–89, 92–112, 128–148, and 182–202; these read ALVQ…ATNA, LGLG…VSAL, IPIY…LINA, FGLY…CIVI, ALDG…LGAL, and PFLL…LLAG.

It belongs to the NqrDE/RnfAE family. In terms of assembly, the complex is composed of six subunits: RnfA, RnfB, RnfC, RnfD, RnfE and RnfG.

The protein resides in the cell inner membrane. Functionally, part of a membrane-bound complex that couples electron transfer with translocation of ions across the membrane. The chain is Ion-translocating oxidoreductase complex subunit E from Yersinia pestis bv. Antiqua (strain Angola).